A 63-amino-acid chain; its full sequence is Beta-defensin 3 (63 aa).

A signal peptide spans 1 to 20; that stretch reads MRIHYLLFAFLLVLLSPPAA. A propeptide spanning residues 21-22 is cleaved from the precursor; sequence FS. Disulfide bonds link C31–C59, C38–C52, and C42–C60.

It belongs to the beta-defensin family. LAP/TAP subfamily. In terms of tissue distribution, highest expression in salivary glands, epididymis, ovary and pancreas and to a lesser extent in lung, liver and brain. Low or no expression in skeletal muscle and tongue.

The protein resides in the secreted. Antimicrobial activity against Gram-negative bacteria E.coli and P.aeruginosa. In Mus musculus (Mouse), this protein is Beta-defensin 3 (Defb3).